The chain runs to 409 residues: Z-DNA-binding protein 1 (409 aa).

2 Z-binding domains span residues 8-70 (LGTG…SLGG) and 85-147 (SAAQ…TIYR). Residues Lys-17 and Lys-43 each participate in a glycyl lysine isopeptide (Lys-Gly) (interchain with G-Cter in ubiquitin) cross-link. The disordered stretch occupies residues 59-87 (SSPAPATWSLGGDGASGDGAPEIPEDSAA). 2 consecutive short sequence motifs (RIP homotypic interaction motif (RHIM)) follow at residues 183–207 (NSLISISNSKAIQIGHGNVMSRQTI) and 241–265 (LIHLNKSMLRRVQLGHGNEMNLERD). Disordered regions lie at residues 269-307 (HPIFSFSSSPPESTTTADPETAFNMQTPEPGPHPEGGTT) and 323-369 (GNNN…TPSD). A compositionally biased stretch (low complexity) spans 270 to 290 (PIFSFSSSPPESTTTADPETA). A compositionally biased stretch (basic and acidic residues) spans 337 to 351 (GTKESADSQELKEDT).

As to quaternary structure, homodimer. Interacts (via RIP homotypic interaction motif) with RIPK3; leading to RIPK3 activation and necroptosis; interaction is enhanced by CASP6. Interacts (via RIP homotypic interaction motif) with RIPK1. Component of the AIM2 PANoptosome complex, a multiprotein complex that drives inflammatory cell death (PANoptosis). In terms of processing, ubiquitinated; polyubiquitinated following influenza A virus (IAV) infection. Post-translationally, phosphorylated.

The protein resides in the cytoplasm. The protein localises to the nucleus. Its activity is regulated as follows. ZBP1-dependent necroptosis is normally inhibited by RIPK1: RIPK1 inhibits the ZBP1-induced activation of RIPK3 via FADD-mediated recruitment of CASP8, which cleaves RIPK1 and limits TNF-induced necroptosis. Its function is as follows. Key innate sensor that recognizes and binds Z-RNA structures, which are produced by a number of viruses, such as herpesvirus, orthomyxovirus or flavivirus, and triggers different forms of cell death. ZBP1 acts as an essential mediator of pyroptosis, necroptosis and apoptosis (PANoptosis), an integral part of host defense against pathogens, by activating RIPK3, caspase-8 (CASP8), and the NLRP3 inflammasome. Key activator of necroptosis, a programmed cell death process in response to death-inducing TNF-alpha family members, via its ability to bind Z-RNA: once activated upon Z-RNA-binding, ZBP1 interacts and stimulates RIPK3 kinase, which phosphorylates and activates MLKL, triggering execution of programmed necrosis. In addition to TNF-induced necroptosis, necroptosis can also take place in the nucleus in response to orthomyxoviruses infection: ZBP1 recognizes and binds Z-RNA structures that are produced in infected nuclei by orthomyxoviruses, such as the influenza A virus (IAV), leading to ZBP1 activation, RIPK3 stimulation and subsequent MLKL phosphorylation, triggering disruption of the nuclear envelope and leakage of cellular DNA into the cytosol. ZBP1-dependent cell death in response to IAV infection promotes interleukin-1 alpha (IL1A) induction in an NLRP3-inflammasome-independent manner: IL1A expression is required for the optimal interleukin-1 beta (IL1B) production, and together, these cytokines promote infiltration of inflammatory neutrophils to the lung, leading to the formation of neutrophil extracellular traps. In addition to its direct role in driving necroptosis via its ability to sense Z-RNAs, also involved in PANoptosis triggered in response to bacterial infection: component of the AIM2 PANoptosome complex, a multiprotein complex that triggers PANoptosis. Also acts as the apical sensor of fungal infection responsible for activating PANoptosis. Involved in CASP8-mediated cell death via its interaction with RIPK1 but independently of its ability to sense Z-RNAs. In some cell types, also able to restrict viral replication by promoting cell death-independent responses. In response to flavivirus infection in neurons, promotes a cell death-independent pathway that restricts viral replication: together with RIPK3, promotes a death-independent transcriptional program that modifies the cellular metabolism via up-regulation expression of the enzyme ACOD1/IRG1 and production of the metabolite itaconate. Itaconate inhibits the activity of succinate dehydrogenase, generating a metabolic state in neurons that suppresses replication of viral genomes. This is Z-DNA-binding protein 1 from Rattus norvegicus (Rat).